The sequence spans 49 residues: Large ribosomal subunit protein bL33 (49 aa).

This sequence belongs to the bacterial ribosomal protein bL33 family.

The protein is Large ribosomal subunit protein bL33 of Lactiplantibacillus plantarum (strain ATCC BAA-793 / NCIMB 8826 / WCFS1) (Lactobacillus plantarum).